Here is a 387-residue protein sequence, read N- to C-terminus: Pepsin A (387 aa).

Positions 1-15 (MKWLLLLSLVALSEC) are cleaved as a signal peptide. Residues 16 to 61 (LYKVSLIKKKSLRKNLIEHGLLKDFLKNNTLDPASKYFPQGEAATM) constitute a propeptide, activation peptide. A Peptidase A1 domain is found at 75–384 (YFGTIGIGTP…DRANNQVGLA (310 aa)). The active site involves aspartate 93. Cysteine 106 and cysteine 111 are joined by a disulfide. Serine 129 is subject to Phosphoserine. An intrachain disulfide couples cysteine 267 to cysteine 271. Residue aspartate 276 is part of the active site. Cysteine 310 and cysteine 343 are disulfide-bonded.

Belongs to the peptidase A1 family.

It localises to the secreted. It catalyses the reaction Preferential cleavage: hydrophobic, preferably aromatic, residues in P1 and P1' positions. Cleaves 1-Phe-|-Val-2, 4-Gln-|-His-5, 13-Glu-|-Ala-14, 14-Ala-|-Leu-15, 15-Leu-|-Tyr-16, 16-Tyr-|-Leu-17, 23-Gly-|-Phe-24, 24-Phe-|-Phe-25 and 25-Phe-|-Tyr-26 bonds in the B chain of insulin.. Inhibited by pepstatin. In terms of biological role, shows particularly broad specificity; although bonds involving phenylalanine and leucine are preferred, many others are also cleaved to some extent. The polypeptide is Pepsin A (PGA) (Callithrix jacchus (White-tufted-ear marmoset)).